We begin with the raw amino-acid sequence, 295 residues long: Ethanolamine ammonia-lyase small subunit (295 aa).

Adenosylcob(III)alamin is bound by residues Val207, Glu228, and Cys258.

This sequence belongs to the EutC family. In terms of assembly, the basic unit is a heterodimer which dimerizes to form tetramers. The heterotetramers trimerize; 6 large subunits form a core ring with 6 small subunits projecting outwards. Requires adenosylcob(III)alamin as cofactor.

Its subcellular location is the bacterial microcompartment. The enzyme catalyses ethanolamine = acetaldehyde + NH4(+). Its pathway is amine and polyamine degradation; ethanolamine degradation. Its function is as follows. Catalyzes the deamination of various vicinal amino-alcohols to oxo compounds. Allows this organism to utilize ethanolamine as the sole source of nitrogen and carbon in the presence of external vitamin B12. In Escherichia coli O139:H28 (strain E24377A / ETEC), this protein is Ethanolamine ammonia-lyase small subunit.